The primary structure comprises 182 residues: Plasmolipin (182 aa).

Over 1–35 the chain is Cytoplasmic; sequence MAEFPSKVSTRTSSPAQGVGASVSALRPDLGFVRS. Phosphoserine is present on Ser9. The 135-residue stretch at 32-166 folds into the MARVEL domain; it reads FVRSALGVLA…SAFFSFQAWR (135 aa). The chain crosses the membrane as a helical span at residues 36 to 56; that stretch reads ALGVLALLQLALGLLVWALIA. The Extracellular segment spans residues 57-68; sequence DTPYHLYPAYGW. Residues 69 to 89 form a helical membrane-spanning segment; it reads VMFVAVFLWLVTIVFFIIYLF. Over 90–99 the chain is Cytoplasmic; the sequence is QLHMKLYMVP. Residues 100 to 120 form a helical membrane-spanning segment; it reads WPLVLLIFFVAATVLYITAFI. The Extracellular portion of the chain corresponds to 121–141; sequence ACAAAVDLTSLRGSRPYNQRS. A helical membrane pass occupies residues 142–162; that stretch reads AASFFACLVMIAYGVSAFFSF. The Cytoplasmic segment spans residues 163 to 182; that stretch reads QAWRGVGSNAATSQMAGGYS.

This sequence belongs to the MAL family. In terms of assembly, forms oligomers. Phosphorylated.

It is found in the membrane. Its subcellular location is the cell membrane. The protein resides in the myelin membrane. The protein localises to the apical cell membrane. Its function is as follows. Main component of the myelin sheath that plays an important role in myelin membrane biogenesis and myelination. Plays an essential function in apical endocytosis. Regulates epithelial development through the regulation of apical endocytosis. Part of the intracellular machinery that mediates basolateral-to-apical transport of ICAM-1, an essential adhesion receptor in epithelial cells, from the subapical compartment in hepatic epithelial cells. This Mus musculus (Mouse) protein is Plasmolipin (Pllp).